Reading from the N-terminus, the 183-residue chain is Large ribosomal subunit protein uL6 (183 aa).

The protein belongs to the universal ribosomal protein uL6 family. In terms of assembly, part of the 50S ribosomal subunit.

Its function is as follows. This protein binds to the 23S rRNA, and is important in its secondary structure. It is located near the subunit interface in the base of the L7/L12 stalk, and near the tRNA binding site of the peptidyltransferase center. The sequence is that of Large ribosomal subunit protein uL6 from Chlamydia pneumoniae (Chlamydophila pneumoniae).